The following is an 87-amino-acid chain: UPF0250 protein PC1_1177 (87 aa).

The protein belongs to the UPF0250 family.

The protein is UPF0250 protein PC1_1177 of Pectobacterium carotovorum subsp. carotovorum (strain PC1).